Reading from the N-terminus, the 154-residue chain is Prefoldin subunit 2 (154 aa).

Residues 124 to 139 (IRLMGEDEKPAAKENS) are compositionally biased toward basic and acidic residues. A disordered region spans residues 124–154 (IRLMGEDEKPAAKENSEGAGAKASSAGVLVS). The span at 140–154 (EGAGAKASSAGVLVS) shows a compositional bias: low complexity.

Belongs to the prefoldin subunit beta family. As to quaternary structure, heterohexamer of two PFD-alpha type and four PFD-beta type subunits. Component of the PAQosome complex which is responsible for the biogenesis of several protein complexes and which consists of R2TP complex members RUVBL1, RUVBL2, RPAP3 and PIH1D1, URI complex members PFDN2, PFDN6, PDRG1, UXT and URI1 as well as ASDURF, POLR2E and DNAAF10/WDR92. Interacts with URI1; the interaction is phosphorylation-dependent and occurs in a growth-dependent manner.

Its subcellular location is the nucleus. The protein resides in the cytoplasm. It localises to the mitochondrion. Functionally, binds specifically to cytosolic chaperonin (c-CPN) and transfers target proteins to it. Binds to nascent polypeptide chain and promotes folding in an environment in which there are many competing pathways for nonnative proteins. The protein is Prefoldin subunit 2 (PFDN2) of Homo sapiens (Human).